A 118-amino-acid chain; its full sequence is Large ribosomal subunit protein bL20 (118 aa).

This sequence belongs to the bacterial ribosomal protein bL20 family.

Its function is as follows. Binds directly to 23S ribosomal RNA and is necessary for the in vitro assembly process of the 50S ribosomal subunit. It is not involved in the protein synthesizing functions of that subunit. The polypeptide is Large ribosomal subunit protein bL20 (Macrococcus caseolyticus (strain JCSC5402) (Macrococcoides caseolyticum)).